We begin with the raw amino-acid sequence, 368 residues long: Propane 2-monooxygenase, hydroxylase component small subunit (368 aa).

Residues Met-1 to Arg-33 are disordered.

It belongs to the TmoE/XamoE family. In terms of assembly, the propane 2-monooxygenase multicomponent enzyme system is composed of an electron transfer component and a monooxygenase component interacting with the effector protein PrmD. The electron transfer component is composed of a reductase (PrmB), and the monooxygenase component is formed by a large subunit (PrmA) and a small subunit (PrmC). Probably requires the presence of the chaperonin-like protein PrmG to ensure a productive folding, resulting of a soluble PrmC, which leads to the active form of PrmABCD.

It catalyses the reaction propane + NADH + O2 + H(+) = propan-2-ol + NAD(+) + H2O. The catalysed reaction is phenol + NADH + O2 + H(+) = hydroquinone + NAD(+) + H2O. In terms of biological role, component of the propane 2-monooxygenase multicomponent enzyme system which is involved in the degradation of propane via the O2-dependent hydroxylation of propane. Under acetone induction, also able to catalyze the oxidation of phenol to yield hydroquinone. The sequence is that of Propane 2-monooxygenase, hydroxylase component small subunit from Gordonia sp. (strain TY-5).